Consider the following 123-residue polypeptide: Small ribosomal subunit protein uS12 (123 aa).

The interval 1 to 24 (MPTINQLIRKERKKQVKKSKSPAL) is disordered. Over residues 10-20 (KERKKQVKKSK) the composition is skewed to basic residues. Residue aspartate 89 is modified to 3-methylthioaspartic acid.

Belongs to the universal ribosomal protein uS12 family. As to quaternary structure, part of the 30S ribosomal subunit. Contacts proteins S8 and S17. May interact with IF1 in the 30S initiation complex.

Its function is as follows. With S4 and S5 plays an important role in translational accuracy. Functionally, interacts with and stabilizes bases of the 16S rRNA that are involved in tRNA selection in the A site and with the mRNA backbone. Located at the interface of the 30S and 50S subunits, it traverses the body of the 30S subunit contacting proteins on the other side and probably holding the rRNA structure together. The combined cluster of proteins S8, S12 and S17 appears to hold together the shoulder and platform of the 30S subunit. The protein is Small ribosomal subunit protein uS12 of Sulfurovum sp. (strain NBC37-1).